Here is an 88-residue protein sequence, read N- to C-terminus: MAASRLPPAALTLKQFMRRQQVLLLYRKILRAIRQVPSDSDRKYLQDWAREEFKRNKSATEEDTIRMMITQGNMQLKELERTLALANS.

Residues 1-19 (MAASRLPPAALTLKQFMRR) constitute a mitochondrion transit peptide.

The protein belongs to the complex I LYR family.

It is found in the mitochondrion. Functionally, involved in efficient integration of the N-module into mitochondrial respiratory chain complex I. In Mus musculus (Mouse), this protein is LYR motif-containing protein 2 (Lyrm2).